Consider the following 359-residue polypeptide: Glyceraldehyde-3-phosphate dehydrogenase, glycosomal (359 aa).

NAD(+) contacts are provided by residues 12–13 (RI), Asp-38, Gln-91, and Ser-134. D-glyceraldehyde 3-phosphate contacts are provided by residues 165 to 167 (SCT), Thr-197, 226 to 227 (TG), and Arg-249. The active-site Nucleophile is Cys-166. Asn-335 lines the NAD(+) pocket. The Microbody targeting signal signature appears at 357 to 359 (ARL).

This sequence belongs to the glyceraldehyde-3-phosphate dehydrogenase family. In terms of assembly, homotetramer.

The protein localises to the glycosome. The catalysed reaction is D-glyceraldehyde 3-phosphate + phosphate + NAD(+) = (2R)-3-phospho-glyceroyl phosphate + NADH + H(+). The protein operates within carbohydrate degradation; glycolysis; pyruvate from D-glyceraldehyde 3-phosphate: step 1/5. The sequence is that of Glyceraldehyde-3-phosphate dehydrogenase, glycosomal from Trypanosoma cruzi.